A 347-amino-acid chain; its full sequence is Quinolinate synthase (347 aa).

His47 and Ser68 together coordinate iminosuccinate. [4Fe-4S] cluster is bound at residue Cys113. Iminosuccinate contacts are provided by residues 139 to 141 (YAN) and Ser156. Cys200 is a [4Fe-4S] cluster binding site. Iminosuccinate contacts are provided by residues 226–228 (HPE) and Thr243. Cys297 lines the [4Fe-4S] cluster pocket.

Belongs to the quinolinate synthase family. Type 1 subfamily. The cofactor is [4Fe-4S] cluster.

The protein localises to the cytoplasm. The enzyme catalyses iminosuccinate + dihydroxyacetone phosphate = quinolinate + phosphate + 2 H2O + H(+). The protein operates within cofactor biosynthesis; NAD(+) biosynthesis; quinolinate from iminoaspartate: step 1/1. Its function is as follows. Catalyzes the condensation of iminoaspartate with dihydroxyacetone phosphate to form quinolinate. The chain is Quinolinate synthase from Escherichia coli O45:K1 (strain S88 / ExPEC).